We begin with the raw amino-acid sequence, 320 residues long: Acetyl-coenzyme A carboxylase carboxyl transferase subunit alpha (320 aa).

The CoA carboxyltransferase C-terminal domain occupies 41–295 (KIEEKAQQAL…GDAIAAAFAE (255 aa)).

Belongs to the AccA family. Acetyl-CoA carboxylase is a heterohexamer composed of biotin carboxyl carrier protein (AccB), biotin carboxylase (AccC) and two subunits each of ACCase subunit alpha (AccA) and ACCase subunit beta (AccD).

It is found in the cytoplasm. The enzyme catalyses N(6)-carboxybiotinyl-L-lysyl-[protein] + acetyl-CoA = N(6)-biotinyl-L-lysyl-[protein] + malonyl-CoA. The protein operates within lipid metabolism; malonyl-CoA biosynthesis; malonyl-CoA from acetyl-CoA: step 1/1. Functionally, component of the acetyl coenzyme A carboxylase (ACC) complex. First, biotin carboxylase catalyzes the carboxylation of biotin on its carrier protein (BCCP) and then the CO(2) group is transferred by the carboxyltransferase to acetyl-CoA to form malonyl-CoA. The polypeptide is Acetyl-coenzyme A carboxylase carboxyl transferase subunit alpha (Rhodopseudomonas palustris (strain ATCC BAA-98 / CGA009)).